Reading from the N-terminus, the 146-residue chain is UPF0310 protein YdcG (146 aa).

Belongs to the UPF0310 family.

The protein is UPF0310 protein YdcG (ydcG) of Bacillus subtilis (strain 168).